A 190-amino-acid polypeptide reads, in one-letter code: Inosine triphosphate pyrophosphatase (190 aa).

8–13 contacts ITP; sequence TGNANK. Residue Glu37 coordinates Mg(2+). ITP-binding positions include Lys49, 65–66, Lys82, 140–143, Lys163, and 168–169; these read DT, FGWD, and HR.

The protein belongs to the HAM1 NTPase family. In terms of assembly, homodimer. Requires Mg(2+) as cofactor. The cofactor is Mn(2+).

The protein localises to the cytoplasm. It localises to the nucleus. The enzyme catalyses ITP + H2O = IMP + diphosphate + H(+). The catalysed reaction is dITP + H2O = dIMP + diphosphate + H(+). It catalyses the reaction XTP + H2O = XMP + diphosphate + H(+). Functionally, pyrophosphatase that hydrolyzes non-canonical purine nucleotides such as inosine triphosphate (ITP), deoxyinosine triphosphate (dITP) or xanthosine 5'-triphosphate (XTP) to their respective monophosphate derivatives. The enzyme does not distinguish between the deoxy- and ribose forms. Probably excludes non-canonical purines from RNA and DNA precursor pools, thus preventing their incorporation into RNA and DNA and avoiding chromosomal lesions. The sequence is that of Inosine triphosphate pyrophosphatase from Batrachochytrium dendrobatidis (strain JAM81 / FGSC 10211) (Frog chytrid fungus).